The primary structure comprises 185 residues: Ribosome-recycling factor (185 aa).

The protein belongs to the RRF family.

Its subcellular location is the cytoplasm. Functionally, responsible for the release of ribosomes from messenger RNA at the termination of protein biosynthesis. May increase the efficiency of translation by recycling ribosomes from one round of translation to another. The sequence is that of Ribosome-recycling factor from Oceanobacillus iheyensis (strain DSM 14371 / CIP 107618 / JCM 11309 / KCTC 3954 / HTE831).